Reading from the N-terminus, the 112-residue chain is T cell receptor alpha variable 9-1 (112 aa).

The signal sequence occupies residues 1-20 (MNSSPGPAIALFLMFGGING). Residues 21 to 112 (DSVVQTEGQV…DSAVYFCALS (92 aa)) form the Ig-like domain. An N-linked (GlcNAc...) asparagine glycan is attached at Asn41. Cys42 and Cys109 are joined by a disulfide.

As to quaternary structure, alpha-beta TR is a heterodimer composed of an alpha and beta chain; disulfide-linked. The alpha-beta TR is associated with the transmembrane signaling CD3 coreceptor proteins to form the TR-CD3 (TcR or TCR). The assembly of alpha-beta TR heterodimers with CD3 occurs in the endoplasmic reticulum where a single alpha-beta TR heterodimer associates with one CD3D-CD3E heterodimer, one CD3G-CD3E heterodimer and one CD247 homodimer forming a stable octameric structure. CD3D-CD3E and CD3G-CD3E heterodimers preferentially associate with TR alpha and TR beta chains, respectively. The association of the CD247 homodimer is the last step of TcR assembly in the endoplasmic reticulum and is required for transport to the cell surface.

It is found in the cell membrane. V region of the variable domain of T cell receptor (TR) alpha chain that participates in the antigen recognition. Alpha-beta T cell receptors are antigen specific receptors which are essential to the immune response and are present on the cell surface of T lymphocytes. Recognize peptide-major histocompatibility (MH) (pMH) complexes that are displayed by antigen presenting cells (APC), a prerequisite for efficient T cell adaptive immunity against pathogens. Binding of alpha-beta TR to pMH complex initiates TR-CD3 clustering on the cell surface and intracellular activation of LCK that phosphorylates the ITAM motifs of CD3G, CD3D, CD3E and CD247 enabling the recruitment of ZAP70. In turn ZAP70 phosphorylates LAT, which recruits numerous signaling molecules to form the LAT signalosome. The LAT signalosome propagates signal branching to three major signaling pathways, the calcium, the mitogen-activated protein kinase (MAPK) kinase and the nuclear factor NF-kappa-B (NF-kB) pathways, leading to the mobilization of transcription factors that are critical for gene expression and essential for T cell growth and differentiation. The T cell repertoire is generated in the thymus, by V-(D)-J rearrangement. This repertoire is then shaped by intrathymic selection events to generate a peripheral T cell pool of self-MH restricted, non-autoaggressive T cells. Post-thymic interaction of alpha-beta TR with the pMH complexes shapes TR structural and functional avidity. The sequence is that of T cell receptor alpha variable 9-1 from Homo sapiens (Human).